Consider the following 589-residue polypeptide: Sphingosine-1-phosphate lyase (589 aa).

The Lumenal segment spans residues 1-58; the sequence is MSGVSNKTVSINGWYGMPIHLLREEGDFAQFMILTINELKIAIHGYLRNTPWYNMLKD. N-linked (GlcNAc...) asparagine glycosylation is present at Asn6. A helical transmembrane segment spans residues 59–76; it reads YLFVIFCYKLISNFFYLL. Topologically, residues 77–589 are cytoplasmic; it reads KVYGPVRLAV…LGPGEDTATK (513 aa). Lys380 is modified (N6-(pyridoxal phosphate)lysine).

The protein belongs to the group II decarboxylase family. Sphingosine-1-phosphate lyase subfamily. In terms of assembly, homodimer. The cofactor is pyridoxal 5'-phosphate. Post-translationally, glycosylated.

The protein resides in the endoplasmic reticulum membrane. It catalyses the reaction sphinganine 1-phosphate = hexadecanal + phosphoethanolamine. The catalysed reaction is (4R)-hydroxysphinganine 1-phosphate = (2R)-hydroxyhexadecanal + phosphoethanolamine. Its pathway is lipid metabolism; sphingolipid metabolism. Functionally, sphingosine-1-phosphate lyase that cleaves phosphorylated sphingoid bases (PSBs), such as sphingosine-1-phosphate, into fatty aldehydes and phosphoethanolamine. Prefers C-16 dihydrosphingosine-l-phosphate (DHS-P) as a substrate. Regulates intracellular levels of sphingolipid long-chain base phosphates (LCBPs). Plays a role in the regulation of global responses to nutrient deprivation in yeast. The chain is Sphingosine-1-phosphate lyase from Saccharomyces cerevisiae (strain ATCC 204508 / S288c) (Baker's yeast).